The primary structure comprises 150 residues: NADH-quinone oxidoreductase subunit A (150 aa).

The next 3 membrane-spanning stretches (helical) occupy residues 14–34, 70–90, and 98–118; these read WAFA…LLGA, LVAM…AWAV, and LGFI…FYLV.

It belongs to the complex I subunit 3 family. In terms of assembly, NDH-1 is composed of 13 different subunits. Subunits NuoA, H, J, K, L, M, N constitute the membrane sector of the complex.

It is found in the cell inner membrane. The catalysed reaction is a quinone + NADH + 5 H(+)(in) = a quinol + NAD(+) + 4 H(+)(out). In terms of biological role, NDH-1 shuttles electrons from NADH, via FMN and iron-sulfur (Fe-S) centers, to quinones in the respiratory chain. The immediate electron acceptor for the enzyme in this species is believed to be ubiquinone. Couples the redox reaction to proton translocation (for every two electrons transferred, four hydrogen ions are translocated across the cytoplasmic membrane), and thus conserves the redox energy in a proton gradient. This Proteus mirabilis (strain HI4320) protein is NADH-quinone oxidoreductase subunit A.